A 405-amino-acid chain; its full sequence is Arginine biosynthesis bifunctional protein ArgJ (405 aa).

6 residues coordinate substrate: Thr-167, Lys-190, Thr-201, Glu-281, Asn-400, and Ser-405. The active-site Nucleophile is Thr-201.

The protein belongs to the ArgJ family. As to quaternary structure, heterotetramer of two alpha and two beta chains.

The protein resides in the cytoplasm. It carries out the reaction N(2)-acetyl-L-ornithine + L-glutamate = N-acetyl-L-glutamate + L-ornithine. The catalysed reaction is L-glutamate + acetyl-CoA = N-acetyl-L-glutamate + CoA + H(+). It functions in the pathway amino-acid biosynthesis; L-arginine biosynthesis; L-ornithine and N-acetyl-L-glutamate from L-glutamate and N(2)-acetyl-L-ornithine (cyclic): step 1/1. It participates in amino-acid biosynthesis; L-arginine biosynthesis; N(2)-acetyl-L-ornithine from L-glutamate: step 1/4. Functionally, catalyzes two activities which are involved in the cyclic version of arginine biosynthesis: the synthesis of N-acetylglutamate from glutamate and acetyl-CoA as the acetyl donor, and of ornithine by transacetylation between N(2)-acetylornithine and glutamate. The chain is Arginine biosynthesis bifunctional protein ArgJ from Nocardia farcinica (strain IFM 10152).